Here is an 848-residue protein sequence, read N- to C-terminus: MNYVGQLAETVFGTVKELYRGLNPATLSGGIDVLVVRQRDGSFRCSPFHVRFGKLGVLRSREKVVDIEINGEPVDLHMKLGDSGEAFFVQELDSDEEDVPPRLCTSPIPWGGLSGFPSDSQIGTASEPEGLVITGRRKRRRRRKPRRREEDAVDSSSEELEAGAESELTLLEKPTPESPSAQEAEEPSSQPKDIHPYSDGECTPQANLSSGDLMSPKSDSELELRSLEPSPLRAESHMQWVWGRLPKVAKAERPEFSLILESMAEAICALPEEPSPSSSPSEAGVDTLSPPVLHPGVRADTFHPAVEAHCEETAVDSPLAAPESKETKTQNSRGAGHPPATKSWSWTTPESHTPSGHPQVSRGKGSLKRNQHLGPSDIYLDDLPSLDSENVALYFPKSEYGMGARRWSEPSNQKLLESPNPEHIAECTLDSVDKIELSLCGGLADNRDISLEKFTQHMVSYEDLTKNPGLLDDPNLVVKINEKHYNWAVAAPMILSLQAFQKNLPESTVDKLEKEKMPRKGGRWWFSWRRRDFPAEEHSSQREKAATRKQQGEKTEVLSSDDDVPDSPVILEVPPLPSSTPGYVPTYKKSLRLSSDQIRCLNLNEGANDVVFSVTTQYQGTCRCKATIYLWNWDDKVVISDIDGTITKSDALGHILPQLGKDWTHQGITSLYHKIHLNGYKFLYCSARAIGMADLTKGYLQWVSEHGCGLPKGPILLSPSSLFSALHREVIEKKPEVFKVACLSDIQQLFLPQRQPFHAAFGNRPNDVFAYRQVGLPESRIFTVNPRGELIQELIKSHKSTYQRLGEVVELLFPPVVRGPSTDLASPEYSNLSYWRKPLPYVDFEALA.

The tract at residues 1–108 (MNYVGQLAET…VPPRLCTSPI (108 aa)) is N-LIP. 3 disordered regions span residues 97 to 233 (EDVP…SPLR), 271 to 298 (PEEPSPSSSPSEAGVDTLSPPVLHPGVR), and 314 to 373 (AVDS…NQHL). A Nuclear localization signal motif is present at residues 135-144 (GRRKRRRRRK). The span at 135–146 (GRRKRRRRRKPR) shows a compositional bias: basic residues. Positions 151-164 (DAVDSSSEELEAGA) are enriched in acidic residues. 2 positions are modified to phosphoserine: S155 and S156. The segment covering 165–191 (ESELTLLEKPTPESPSAQEAEEPSSQP) has biased composition (low complexity). Phosphoserine is present on S218. Positions 271-282 (PEEPSPSSSPSE) are enriched in low complexity. Residues 342–358 (KSWSWTTPESHTPSGHP) are compositionally biased toward polar residues. A Phosphoserine modification is found at S460. Residues 536–556 (EEHSSQREKAATRKQQGEKTE) show a composition bias toward basic and acidic residues. A disordered region spans residues 536–568 (EEHSSQREKAATRKQQGEKTEVLSSDDDVPDSP). Positions 587–789 (YKKSLRLSSD…RIFTVNPRGE (203 aa)) are C-LIP. A DXDXT motif motif is present at residues 641–645 (DIDGT). The short motif at 652 to 656 (LGHIL) is the LXXIL motif element.

It belongs to the lipin family. The cofactor is Mg(2+). In terms of tissue distribution, significant expression in intestine and other regions of the gastrointestinal tract.

It is found in the nucleus. It carries out the reaction a 1,2-diacyl-sn-glycero-3-phosphate + H2O = a 1,2-diacyl-sn-glycerol + phosphate. Its activity is regulated as follows. Inhibited by N-ethylmaleimide. Magnesium-dependent phosphatidate phosphatase enzyme which catalyzes the conversion of phosphatidic acid to diacylglycerol during triglyceride, phosphatidylcholine and phosphatidylethanolamine biosynthesis therefore regulates fatty acid metabolism. The protein is Phosphatidate phosphatase LPIN3 of Mus musculus (Mouse).